A 276-amino-acid polypeptide reads, in one-letter code: Orotidine 5'-phosphate decarboxylase (276 aa).

Lys96 serves as the catalytic Proton donor.

Belongs to the OMP decarboxylase family. Type 2 subfamily.

The catalysed reaction is orotidine 5'-phosphate + H(+) = UMP + CO2. The protein operates within pyrimidine metabolism; UMP biosynthesis via de novo pathway; UMP from orotate: step 2/2. This chain is Orotidine 5'-phosphate decarboxylase, found in Porphyromonas gingivalis (strain ATCC BAA-308 / W83).